Here is a 69-residue protein sequence, read N- to C-terminus: MSVLTPLLLRSLTGSARRLMVPRAQVHSKPAREQLGVLDITIGLTSCFVCCLLPAGWVLSHLESYKKRE.

The N-terminal 25 residues, 1-25 (MSVLTPLLLRSLTGSARRLMVPRAQ), are a transit peptide targeting the mitochondrion. The SIFI-degron signature appears at 2–19 (SVLTPLLLRSLTGSARRL). At 26–36 (VHSKPAREQLG) the chain is on the mitochondrial matrix side. Residues 37 to 60 (VLDITIGLTSCFVCCLLPAGWVLS) traverse the membrane as a helical segment. The Mitochondrial intermembrane portion of the chain corresponds to 61–69 (HLESYKKRE).

The protein belongs to the cytochrome c oxidase VIII family. As to quaternary structure, component of the cytochrome c oxidase (complex IV, CIV), a multisubunit enzyme composed of 14 subunits. The complex is composed of a catalytic core of 3 subunits MT-CO1, MT-CO2 and MT-CO3, encoded in the mitochondrial DNA, and 11 supernumerary subunits COX4I, COX5A, COX5B, COX6A, COX6B, COX6C, COX7A, COX7B, COX7C, COX8 and NDUFA4, which are encoded in the nuclear genome. The complex exists as a monomer or a dimer and forms supercomplexes (SCs) in the inner mitochondrial membrane with NADH-ubiquinone oxidoreductase (complex I, CI) and ubiquinol-cytochrome c oxidoreductase (cytochrome b-c1 complex, complex III, CIII), resulting in different assemblies (supercomplex SCI(1)III(2)IV(1) and megacomplex MCI(2)III(2)IV(2)). Post-translationally, in response to mitochondrial stress, the precursor protein is ubiquitinated by the SIFI complex in the cytoplasm before mitochondrial import, leading to its degradation. Within the SIFI complex, UBR4 initiates ubiquitin chain that are further elongated or branched by KCMF1.

Its subcellular location is the mitochondrion inner membrane. Its pathway is energy metabolism; oxidative phosphorylation. In terms of biological role, component of the cytochrome c oxidase, the last enzyme in the mitochondrial electron transport chain which drives oxidative phosphorylation. The respiratory chain contains 3 multisubunit complexes succinate dehydrogenase (complex II, CII), ubiquinol-cytochrome c oxidoreductase (cytochrome b-c1 complex, complex III, CIII) and cytochrome c oxidase (complex IV, CIV), that cooperate to transfer electrons derived from NADH and succinate to molecular oxygen, creating an electrochemical gradient over the inner membrane that drives transmembrane transport and the ATP synthase. Cytochrome c oxidase is the component of the respiratory chain that catalyzes the reduction of oxygen to water. Electrons originating from reduced cytochrome c in the intermembrane space (IMS) are transferred via the dinuclear copper A center (CU(A)) of subunit 2 and heme A of subunit 1 to the active site in subunit 1, a binuclear center (BNC) formed by heme A3 and copper B (CU(B)). The BNC reduces molecular oxygen to 2 water molecules using 4 electrons from cytochrome c in the IMS and 4 protons from the mitochondrial matrix. In Mus musculus (Mouse), this protein is Cytochrome c oxidase subunit 8A, mitochondrial (Cox8a).